A 706-amino-acid chain; its full sequence is Coiled-coil domain-containing protein 177 (706 aa).

A compositionally biased stretch (acidic residues) spans 1 to 11 (MVDPVPEEEKE). Disordered stretches follow at residues 1-63 (MVDP…GGRR), 179-262 (ASAL…LREL), and 268-287 (ASARNSCPAGSASSAPNPLG). Low complexity-rich tracts occupy residues 28–49 (PPDAQGAQQPAASSASASAAAP) and 179–209 (ASALSGGSSSSCSSSSSLPASPASRVARRTS). Residues 210–221 (PSPPARSRPPPA) are compositionally biased toward pro residues. Positions 242 to 257 (ALSSESGASSSSYSGE) are enriched in low complexity. S310 is modified (phosphoserine). Residues 360–624 (AAHGQWEQQR…QTRLEKERAQ (265 aa)) adopt a coiled-coil conformation. Disordered regions lie at residues 364 to 386 (QWEQQRVRAEQRREREEREKQRA), 398 to 425 (VEERRGRRGREEREAARRRQQQCERSEE), 448 to 580 (DDRL…EREH), and 651 to 706 (ERSE…LDRK). Residues 368 to 386 (QRVRAEQRREREEREKQRA) are compositionally biased toward basic and acidic residues. 3 stretches are compositionally biased toward basic and acidic residues: residues 448-529 (DDRL…REGL), 548-580 (QEQRARELRERARREELQGRRAKEAAERKEREH), and 651-663 (ERSEQLSRERRSA). The segment covering 664–674 (LESARSTARAS) has biased composition (low complexity). The segment covering 676–706 (HVREKVREETNTRSFDRMVREAQLHASLDRK) has biased composition (basic and acidic residues).

In Mus musculus (Mouse), this protein is Coiled-coil domain-containing protein 177 (Ccdc177).